The primary structure comprises 719 residues: Ribosomal RNA large subunit methyltransferase K/L (719 aa).

Residues 43 to 154 (IGYKACLWSR…KGKANITLDL (112 aa)) enclose the THUMP domain.

This sequence belongs to the methyltransferase superfamily. RlmKL family.

The protein resides in the cytoplasm. The enzyme catalyses guanosine(2445) in 23S rRNA + S-adenosyl-L-methionine = N(2)-methylguanosine(2445) in 23S rRNA + S-adenosyl-L-homocysteine + H(+). The catalysed reaction is guanosine(2069) in 23S rRNA + S-adenosyl-L-methionine = N(2)-methylguanosine(2069) in 23S rRNA + S-adenosyl-L-homocysteine + H(+). Its function is as follows. Specifically methylates the guanine in position 2445 (m2G2445) and the guanine in position 2069 (m7G2069) of 23S rRNA. This is Ribosomal RNA large subunit methyltransferase K/L from Aeromonas salmonicida (strain A449).